A 70-amino-acid polypeptide reads, in one-letter code: Cold shock protein CspV (70 aa).

Residues 7 to 67 form the CSD domain; that stretch reads GSVKWFNETK…GKKGPQASNV (61 aa).

The protein resides in the cytoplasm. The polypeptide is Cold shock protein CspV (cspV) (Vibrio cholerae serotype O1 (strain ATCC 39315 / El Tor Inaba N16961)).